A 1036-amino-acid polypeptide reads, in one-letter code: Histidine kinase 3 (1036 aa).

The Extracellular portion of the chain corresponds to Met-1–Gly-8. A helical transmembrane segment spans residues Phe-9–Val-29. Over Asp-30 to Lys-94 the chain is Cytoplasmic. Residues Leu-95–Ser-115 traverse the membrane as a helical segment. At Ser-116–Pro-399 the chain is on the extracellular side. The 227-residue stretch at Ile-163–Arg-389 folds into the CHASE domain. A helical transmembrane segment spans residues Val-400–Ile-420. Topologically, residues His-421–Ser-1036 are cytoplasmic. A Histidine kinase domain is found at Thr-457–Asn-723. The residue at position 460 (His-460) is a Phosphohistidine; by autocatalysis. 2 consecutive Response regulatory domains span residues Lys-746–Leu-865 and Lys-891–Phe-1028. At Asp-941 the chain carries 4-aspartylphosphate.

Interacts with AHK2, AHK4, AHP1, AHP2, AHP3, AHP5 and At5g43560. Post-translationally, autophosphorylated predominantly on His residues. Activation probably requires a transfer of a phosphate group between a His in the transmitter domain and an Asp of the receiver domain. As to expression, mostly expressed in leaves and flowers, and, to a lower extent, in roots, stems, and siliques, especially in the vascular tissues. Present in seedlings.

It is found in the cell membrane. The protein localises to the endoplasmic reticulum membrane. The catalysed reaction is ATP + protein L-histidine = ADP + protein N-phospho-L-histidine.. Activated by cytokinins to initiate phosphorelay signaling. This cytokinin-mediated activation is repressed by the trans-zeatin antagonists 6-(2-hydroxy-3-methylbenzylamino)purine (PI-55) and 6-(2,5-Dihydroxybenzylamino)purine (LGR-991). Its function is as follows. Cytokinins (CK) receptor related to bacterial two-component regulators. Functions as a histidine kinase and transmits the stress signal to a downstream MAPK cascade. This protein undergoes an ATP-dependent autophosphorylation at a conserved histidine residue in the kinase core, and a phosphoryl group is then transferred to a conserved aspartate residue in the receiver domain. In the presence of cytokinin, feeds phosphate to phosphorelay-integrating histidine phosphotransfer protein (HPt) and activates subsequent cascade. Involved in meristems establishment in seedlings. Redundant negative regulator of drought and salt stress responses and abscisic acid (ABA) signaling. Together with AHK2, plays a negative regulatory role in cold stress signaling via inhibition of ABA response, occurring independently of the cold acclimation pathway. Redundant positive regulator of cytokinin signaling that regulates many developmental processes including seed germination, cell division, seed size, chlorophyll retention during leaf senescence, root repression and shoot promotion. Can interact with isoprenoid-type cytokinins trans-zeatin (tZ and tZR), cis-zeatin (cZ), dihydrozeatin (DZ), buta-2,3-dienyladenine (HA-8), penta-2,3-dienyladenine (HA-1), 4-methyl-penta-2,3-dienyladenine (HA-10), 4-hydroxy-2-butynyladenine (RM1), 2-propynyladenine (RM3), 2-butynyladenine (RM6), and cytokinin ribosides and ribotides. Together with AHK4, involved in the cytokinin-dependent responses to Pi starvation and sucrose stresses. Promotes cytokinin-mediated leaf longevity through a specific phosphorylation of the response regulator ARR2. Involved in alkamides (e.g. N-isobutyl decanamide) and N-acylethanolamides (NAE) signaling that control meristematic activity and differentiation processes during plant development. Contributes to vascular bundle formation and secondary growth in a cytokinin-dependent manner, probably by promoting the maintenance of mitotic activity and/or identity of procambial cells. Plays a role in the cytokinin-mediated repression of the iron uptake pathway. Required by the cytokinin-dependent flower development regulation pathway. The polypeptide is Histidine kinase 3 (AHK3) (Arabidopsis thaliana (Mouse-ear cress)).